Here is a 71-residue protein sequence, read N- to C-terminus: SPI-2 type 3 secretion system needle filament protein (71 aa).

Belongs to the SctF family. In terms of assembly, the core secretion machinery of the T3SS is composed of approximately 20 different proteins, including cytoplasmic components, a base, an export apparatus and a needle. This subunit polymerizes and forms the helical needle filament.

It localises to the secreted. It is found in the cell surface. Its function is as follows. Component of the type III secretion system (T3SS), also called injectisome, which is used to inject bacterial effector proteins into eukaryotic host cells. SsaG/SctF2 forms the external needle filament that protrudes from the bacterial surface. Functionally, during infection, can induce innate immune responses. The needle proteins interact with host TLR2 or TLR4, and induce signaling by NF-kappa-B and/or AP-1. This activation is MyD88 dependent and results in increased expression of cytokines, including TNF-alpha, IL-6 and IL-8. In Salmonella typhimurium (strain LT2 / SGSC1412 / ATCC 700720), this protein is SPI-2 type 3 secretion system needle filament protein.